The chain runs to 505 residues: Trans-cinnamate 4-monooxygenase (505 aa).

A helical transmembrane segment spans residues 3–23; that stretch reads LLLLEKTLLGLFLAAVVAIVV. Residues 213 to 218 and A306 each bind (E)-cinnamate; that span reads RSRLAQ. A heme-binding site is contributed by C447.

Belongs to the cytochrome P450 family. The cofactor is heme.

It is found in the membrane. The enzyme catalyses (E)-cinnamate + reduced [NADPH--hemoprotein reductase] + O2 = (E)-4-coumarate + oxidized [NADPH--hemoprotein reductase] + H2O + H(+). The protein operates within phenylpropanoid metabolism; trans-4-coumarate biosynthesis; trans-4-coumarate from trans-cinnamate: step 1/1. In terms of biological role, catalyzes the first oxidative step of the phenylpropanoid pathway in higher plants by transforming trans-cinnamate into p-coumarate. The compounds formed by this pathway are essential components for lignification, pollination, and defense against ultraviolet light, predators and pathogens. In Vigna radiata var. radiata (Mung bean), this protein is Trans-cinnamate 4-monooxygenase (CYP73A2).